We begin with the raw amino-acid sequence, 337 residues long: Retrovirus-related Pol polyprotein from type-1 retrotransposable element R1 (337 aa).

Residues 1–118 (GCPQGSISGP…KSARYLGVCM (118 aa)) form the Reverse transcriptase domain. A nucleic acid-binding endonuclease region spans residues 253–337 (KRARSCKLMK…ACPCGAPRED (85 aa)).

It catalyses the reaction DNA(n) + a 2'-deoxyribonucleoside 5'-triphosphate = DNA(n+1) + diphosphate. This Nasonia vitripennis (Parasitic wasp) protein is Retrovirus-related Pol polyprotein from type-1 retrotransposable element R1.